We begin with the raw amino-acid sequence, 367 residues long: Serine/threonine-protein kinase Sgk2 (367 aa).

The segment at 1 to 28 (MASSPVGVPSPQPSRANGNINLGPSANP) is disordered. Residue Ser10 is modified to Phosphoserine. A compositionally biased stretch (polar residues) spans 15–28 (RANGNINLGPSANP). The Protein kinase domain maps to 35 to 292 (FDFLKVIGKG…FLDIKNHMFF (258 aa)). ATP contacts are provided by residues 41–49 (IGKGNYGKV) and Lys64. Positions 68–78 (KKSILKNKEQN) match the Nuclear localization signal motif. The active-site Proton acceptor is Asp159. Residue Thr193 is modified to Phosphothreonine; by PDPK1. Residues 293-367 (SPINWDDLYH…AQDDDDILDS (75 aa)) enclose the AGC-kinase C-terminal domain. 2 positions are modified to phosphoserine: Ser334 and Ser356. Tyr357 is modified (phosphotyrosine).

Belongs to the protein kinase superfamily. AGC Ser/Thr protein kinase family. Activated by phosphorylation on Ser-356 by an unknown kinase (may be mTORC2 but not confirmed), transforming it into a substrate for PDPK1 which then phosphorylates it on Thr-193.

It is found in the cytoplasm. It localises to the nucleus. The enzyme catalyses L-seryl-[protein] + ATP = O-phospho-L-seryl-[protein] + ADP + H(+). It catalyses the reaction L-threonyl-[protein] + ATP = O-phospho-L-threonyl-[protein] + ADP + H(+). Two specific sites, one in the kinase domain (Thr-193) and the other in the C-terminal regulatory region (Ser-356), need to be phosphorylated for its full activation. Functionally, serine/threonine-protein kinase which is involved in the regulation of a wide variety of ion channels, membrane transporters, cell growth, survival and proliferation. Up-regulates Na(+) channels: SCNN1A/ENAC, K(+) channels: KCNA3/Kv1.3, KCNE1 and KCNQ1, amino acid transporter: SLC6A19, glutamate transporter: SLC1A6/EAAT4, glutamate receptors: GRIA1/GLUR1 and GRIK2/GLUR6, Na(+)/H(+) exchanger: SLC9A3/NHE3, and the Na(+)/K(+) ATPase. In Mus musculus (Mouse), this protein is Serine/threonine-protein kinase Sgk2 (Sgk2).